The sequence spans 73 residues: Beta-defensin 108B (73 aa).

A signal peptide spans 1-22; that stretch reads MRIAVLLFAIFFFMSQVLPARG. Intrachain disulfides connect cysteine 28/cysteine 55, cysteine 35/cysteine 49, and cysteine 39/cysteine 56.

The protein belongs to the beta-defensin family. As to expression, specifically expressed in testis. Low expression is detected also in liver.

The protein localises to the secreted. Functionally, has antibacterial activity. The chain is Beta-defensin 108B (DEFB108B) from Homo sapiens (Human).